Here is a 700-residue protein sequence, read N- to C-terminus: Polyribonucleotide nucleotidyltransferase (700 aa).

Mg(2+) is bound by residues Asp-491 and Asp-497. The region spanning 558–617 (PNYAVIEINPDKIRDVIGKGGATIRQLTEETGAVIDIDDAGTIRIFGENKAATKAAIAKI) is the KH domain. The S1 motif domain maps to 627-695 (GKTYEGTVAR…NRGRIKLTMK (69 aa)).

Belongs to the polyribonucleotide nucleotidyltransferase family. In terms of assembly, component of the RNA degradosome, which is a multiprotein complex involved in RNA processing and mRNA degradation. Mg(2+) is required as a cofactor.

Its subcellular location is the cytoplasm. The catalysed reaction is RNA(n+1) + phosphate = RNA(n) + a ribonucleoside 5'-diphosphate. In terms of biological role, involved in mRNA degradation. Catalyzes the phosphorolysis of single-stranded polyribonucleotides processively in the 3'- to 5'-direction. This chain is Polyribonucleotide nucleotidyltransferase, found in Psychrobacter arcticus (strain DSM 17307 / VKM B-2377 / 273-4).